The chain runs to 214 residues: Thymidylate kinase (214 aa).

15 to 22 (GLEGAGKT) provides a ligand contact to ATP.

Belongs to the thymidylate kinase family.

It catalyses the reaction dTMP + ATP = dTDP + ADP. Phosphorylation of dTMP to form dTDP in both de novo and salvage pathways of dTTP synthesis. The polypeptide is Thymidylate kinase (Haemophilus ducreyi (strain 35000HP / ATCC 700724)).